The following is a 355-amino-acid chain: Type II restriction enzyme CfrBI (355 aa).

It carries out the reaction Endonucleolytic cleavage of DNA to give specific double-stranded fragments with terminal 5'-phosphates.. In terms of biological role, a P subtype restriction enzyme that recognizes the double-stranded sequence 5'-CCWWGG-3' and cleaves after C-1. This Citrobacter freundii protein is Type II restriction enzyme CfrBI.